The following is a 321-amino-acid chain: Bifunctional methyltransferase/endonuclease (321 aa).

Positions 1–86 are probable methylated-DNA--protein-cysteine methyltransferase; sequence MLSVDYENFD…PLGSAEKMRR (86 aa). The active site involves Cys61. Residues 87 to 318 are endonuclease V; it reads LIRDGITITN…YDFSTRNTAI (232 aa). Mg(2+) contacts are provided by Asp145 and Asp204.

In the N-terminal section; belongs to the MGMT family. The protein in the C-terminal section; belongs to the endonuclease V family. The cofactor is Mg(2+).

The protein resides in the cytoplasm. It carries out the reaction Endonucleolytic cleavage at apurinic or apyrimidinic sites to products with a 5'-phosphate.. In terms of biological role, DNA repair enzyme involved in the repair of deaminated bases. Selectively cleaves double-stranded DNA at the second phosphodiester bond 3' to a deoxyinosine leaving behind the intact lesion on the nicked DNA. This chain is Bifunctional methyltransferase/endonuclease, found in Thermoplasma volcanium (strain ATCC 51530 / DSM 4299 / JCM 9571 / NBRC 15438 / GSS1).